We begin with the raw amino-acid sequence, 197 residues long: Histocompatibility antigen 60c (197 aa).

Positions 1–17 (MALLLLILESCSAGTYA) are cleaved as a signal peptide. Residues Asn-51, Asn-81, and Asn-114 are each glycosylated (N-linked (GlcNAc...) asparagine). A lipid anchor (GPI-anchor amidated serine) is attached at Ser-177. A propeptide spans 178–197 (MACKSSPFDGLIMILLIYIL) (removed in mature form).

It belongs to the NKG2D ligand family. As to expression, expressed in skin, and weakly in large intestine.

Its subcellular location is the cell membrane. In terms of biological role, ligand for the KLRK1 immunosurveillance receptor. Binding to KLRK1 stimulates cell lysis in vitro. The protein is Histocompatibility antigen 60c of Mus musculus (Mouse).